The primary structure comprises 77 residues: MIYKVFYQETKERSPRRETTRALYLDIDASSELEGRIAARQLVEENRPEYNIEYIELLSDKLLDYEKETGAFKITEF.

This sequence belongs to the RNA polymerase subunit epsilon family. RNAP is composed of a core of 2 alpha, a beta and a beta' subunit. The core is associated with a delta subunit, and at least one of epsilon or omega. When a sigma factor is associated with the core the holoenzyme is formed, which can initiate transcription.

The catalysed reaction is RNA(n) + a ribonucleoside 5'-triphosphate = RNA(n+1) + diphosphate. In terms of biological role, a non-essential component of RNA polymerase (RNAP). This Streptococcus pneumoniae (strain P1031) protein is DNA-directed RNA polymerase subunit epsilon.